A 192-amino-acid chain; its full sequence is Ion-translocating oxidoreductase complex subunit B (192 aa).

The hydrophobic stretch occupies residues 1-26; the sequence is MNAIWIAVAAVSLLGLAFGAILGYAS. One can recognise a 4Fe-4S domain in the interval 32 to 91; it reads EDDPVVEKIDEILPQSQCGQCGYPGCRPYAEAISCNGEKINRCAPGGEAVMLKIAELLNV. Cys49, Cys52, Cys57, Cys74, Cys117, Cys120, Cys123, Cys127, Cys147, Cys150, Cys153, and Cys157 together coordinate [4Fe-4S] cluster. 4Fe-4S ferredoxin-type domains follow at residues 108–137 and 138–167; these read MVAV…GATR and AMHT…LQPV.

This sequence belongs to the 4Fe4S bacterial-type ferredoxin family. RnfB subfamily. In terms of assembly, the complex is composed of six subunits: RsxA, RsxB, RsxC, RsxD, RsxE and RsxG. [4Fe-4S] cluster is required as a cofactor.

It is found in the cell inner membrane. Its function is as follows. Part of a membrane-bound complex that couples electron transfer with translocation of ions across the membrane. Required to maintain the reduced state of SoxR. The sequence is that of Ion-translocating oxidoreductase complex subunit B from Escherichia coli O139:H28 (strain E24377A / ETEC).